A 290-amino-acid polypeptide reads, in one-letter code: Ribosomal RNA small subunit methyltransferase A (290 aa).

Asparagine 27, leucine 29, glycine 54, glutamate 75, aspartate 100, and asparagine 125 together coordinate S-adenosyl-L-methionine.

Belongs to the class I-like SAM-binding methyltransferase superfamily. rRNA adenine N(6)-methyltransferase family. RsmA subfamily.

It is found in the cytoplasm. The enzyme catalyses adenosine(1518)/adenosine(1519) in 16S rRNA + 4 S-adenosyl-L-methionine = N(6)-dimethyladenosine(1518)/N(6)-dimethyladenosine(1519) in 16S rRNA + 4 S-adenosyl-L-homocysteine + 4 H(+). Functionally, specifically dimethylates two adjacent adenosines (A1518 and A1519) in the loop of a conserved hairpin near the 3'-end of 16S rRNA in the 30S particle. May play a critical role in biogenesis of 30S subunits. The chain is Ribosomal RNA small subunit methyltransferase A from Streptococcus equi subsp. zooepidemicus (strain H70).